We begin with the raw amino-acid sequence, 370 residues long: Actin-related protein 2/3 complex subunit 1A-B (370 aa).

WD repeat units follow at residues 6 to 45 (FLLE…WVKC), 50 to 89 (EHNG…WKPT), 140 to 179 (PIRS…VDEK), 202 to 241 (SSGG…SVSQ), 244 to 284 (TEFL…TFVS), and 322 to 365 (LHQN…SYIQ).

Belongs to the WD repeat ARPC1 family. In terms of assembly, component of the Arp2/3 complex.

The protein localises to the cytoplasm. It localises to the cytoskeleton. It is found in the nucleus. In terms of biological role, probably functions as a component of the Arp2/3 complex which is involved in regulation of actin polymerization and together with an activating nucleation-promoting factor (NPF) mediates the formation of branched actin networks. In addition to its role in the cytoplasmic cytoskeleton, the Arp2/3 complex also promotes actin polymerization in the nucleus, thereby regulating gene transcription and repair of damaged DNA. The polypeptide is Actin-related protein 2/3 complex subunit 1A-B (arpc1a-b) (Xenopus laevis (African clawed frog)).